We begin with the raw amino-acid sequence, 238 residues long: Uridylate kinase (238 aa).

12–15 contributes to the ATP binding site; that stretch reads KLSG. A UMP-binding site is contributed by G54. ATP contacts are provided by G55 and R59. Residues D74 and 135 to 142 contribute to the UMP site; that span reads TGNPFFTT. ATP is bound by residues T162, N163, Y168, and D171.

Belongs to the UMP kinase family. As to quaternary structure, homohexamer.

Its subcellular location is the cytoplasm. It catalyses the reaction UMP + ATP = UDP + ADP. It participates in pyrimidine metabolism; CTP biosynthesis via de novo pathway; UDP from UMP (UMPK route): step 1/1. With respect to regulation, inhibited by UTP. Functionally, catalyzes the reversible phosphorylation of UMP to UDP. The protein is Uridylate kinase of Rhodopseudomonas palustris (strain BisA53).